We begin with the raw amino-acid sequence, 184 residues long: ATP-dependent protease subunit HslV (184 aa).

T12 is an active-site residue. The Na(+) site is built by A166, C169, and T172.

It belongs to the peptidase T1B family. HslV subfamily. In terms of assembly, a double ring-shaped homohexamer of HslV is capped on each side by a ring-shaped HslU homohexamer. The assembly of the HslU/HslV complex is dependent on binding of ATP.

It is found in the cytoplasm. The catalysed reaction is ATP-dependent cleavage of peptide bonds with broad specificity.. Allosterically activated by HslU binding. Functionally, protease subunit of a proteasome-like degradation complex believed to be a general protein degrading machinery. In Nitrobacter hamburgensis (strain DSM 10229 / NCIMB 13809 / X14), this protein is ATP-dependent protease subunit HslV.